A 269-amino-acid polypeptide reads, in one-letter code: Small ribosomal subunit protein uS2 (269 aa).

Residues 224 to 269 (ANQGREDSEDVYSETENDTEETDEELVSEEDLKEFVENSEEESDEE) are disordered. The span at 230 to 269 (DSEDVYSETENDTEETDEELVSEEDLKEFVENSEEESDEE) shows a compositional bias: acidic residues.

Belongs to the universal ribosomal protein uS2 family.

In Finegoldia magna (strain ATCC 29328 / DSM 20472 / WAL 2508) (Peptostreptococcus magnus), this protein is Small ribosomal subunit protein uS2.